The sequence spans 454 residues: Flavonoid 3-O-glucosyltransferase (454 aa).

A UDP-binding site is contributed by Thr-25. The active-site Proton acceptor is His-26. Arg-89 provides a ligand contact to myricetin. The Charge relay role is filled by Asp-124. Myricetin-binding residues include His-155, Glu-192, and Phe-202. Positions 282, 308, 334, and 335 each coordinate UDP. Residues Ala-335, Gln-337, His-352, Trp-355, Asn-356, Ser-357, and Glu-360 each coordinate UDP-alpha-D-glucose. Residue His-352 coordinates UDP. Residues Asn-356, Ser-357, and Glu-360 each coordinate UDP. Gly-375 contributes to the myricetin binding site. Residues Asp-376 and Gln-377 each coordinate UDP-alpha-D-glucose.

It belongs to the UDP-glycosyltransferase family. As to expression, highly expressed in flower buds, flowers and pods. Lower expression in leaves, petioles and stems.

The protein operates within secondary metabolite biosynthesis; flavonoid biosynthesis. In terms of biological role, catalyzes the glycosylation of flavonoids at the 3-O-position. Glycosylates the 7-O-position if the 3-O-position is not available. Also able to perform 3-O-glycosylation of anthocyanidins. This Medicago truncatula (Barrel medic) protein is Flavonoid 3-O-glucosyltransferase (UGT78G1).